The sequence spans 133 residues: Small ribosomal subunit protein uS11 (133 aa).

The interval 114–133 (VTPIPHDGTRPPGGKRGRRV) is disordered.

The protein belongs to the universal ribosomal protein uS11 family. As to quaternary structure, part of the 30S ribosomal subunit.

Located on the platform of the 30S subunit. The chain is Small ribosomal subunit protein uS11 from Archaeoglobus fulgidus (strain ATCC 49558 / DSM 4304 / JCM 9628 / NBRC 100126 / VC-16).